The sequence spans 383 residues: UDP-N-acetylglucosamine--N-acetylmuramyl-(pentapeptide) pyrophosphoryl-undecaprenol N-acetylglucosamine transferase (383 aa).

UDP-N-acetyl-alpha-D-glucosamine-binding positions include 10-12, Asn-124, Arg-165, Ser-190, Ile-245, and Gln-290; that span reads TGG. The disordered stretch occupies residues 363–383; sequence SPFGQAREPGQKPARPPDPAS.

The protein belongs to the glycosyltransferase 28 family. MurG subfamily.

The protein localises to the cell inner membrane. It catalyses the reaction di-trans,octa-cis-undecaprenyl diphospho-N-acetyl-alpha-D-muramoyl-L-alanyl-D-glutamyl-meso-2,6-diaminopimeloyl-D-alanyl-D-alanine + UDP-N-acetyl-alpha-D-glucosamine = di-trans,octa-cis-undecaprenyl diphospho-[N-acetyl-alpha-D-glucosaminyl-(1-&gt;4)]-N-acetyl-alpha-D-muramoyl-L-alanyl-D-glutamyl-meso-2,6-diaminopimeloyl-D-alanyl-D-alanine + UDP + H(+). It functions in the pathway cell wall biogenesis; peptidoglycan biosynthesis. Functionally, cell wall formation. Catalyzes the transfer of a GlcNAc subunit on undecaprenyl-pyrophosphoryl-MurNAc-pentapeptide (lipid intermediate I) to form undecaprenyl-pyrophosphoryl-MurNAc-(pentapeptide)GlcNAc (lipid intermediate II). This chain is UDP-N-acetylglucosamine--N-acetylmuramyl-(pentapeptide) pyrophosphoryl-undecaprenol N-acetylglucosamine transferase, found in Anaeromyxobacter dehalogenans (strain 2CP-1 / ATCC BAA-258).